Reading from the N-terminus, the 235-residue chain is Acyl-protein thioesterase 1 (235 aa).

Residues S119, D172, and H206 each act as charge relay system in the active site.

Belongs to the AB hydrolase superfamily. AB hydrolase 2 family.

It localises to the cytoplasm. The protein resides in the nucleus. The catalysed reaction is S-hexadecanoyl-L-cysteinyl-[protein] + H2O = L-cysteinyl-[protein] + hexadecanoate + H(+). In terms of biological role, hydrolyzes fatty acids from S-acylated cysteine residues in proteins with a strong preference for palmitoylated G-alpha proteins over other acyl substrates. Mediates the deacylation of G-alpha proteins such as GPA1 in vivo, but has weak or no activity toward palmitoylated Ras proteins. Has weak lysophospholipase activity in vitro; however such activity may not exist in vivo. The polypeptide is Acyl-protein thioesterase 1 (Eremothecium gossypii (strain ATCC 10895 / CBS 109.51 / FGSC 9923 / NRRL Y-1056) (Yeast)).